We begin with the raw amino-acid sequence, 235 residues long: MLNITPIPALSDNYIWAIQKDNDVIIVDPSDAVPVLAFIAKNQLNLTAILLTHNHHDHTDGMPELLSRYPQLSVYGPQEVAQFANRIVQPEDHLTLFDYDVRVIESAGHTAQHVSYLFGNEYLFCGDALFSGGCGRVFTGNYQAQFDALQRFKALPEFVEIFPAHEYTLSNLKFAEAVLAPSCALFEIQERAEILRSRNQPTLPTTLERELQINPFLQAVDLDQFIALRHQKDNF.

7 residues coordinate Zn(2+): H53, H55, D57, H58, H109, D127, and H165.

Belongs to the metallo-beta-lactamase superfamily. Glyoxalase II family. Monomer. It depends on Zn(2+) as a cofactor.

The enzyme catalyses an S-(2-hydroxyacyl)glutathione + H2O = a 2-hydroxy carboxylate + glutathione + H(+). It functions in the pathway secondary metabolite metabolism; methylglyoxal degradation; (R)-lactate from methylglyoxal: step 2/2. Functionally, thiolesterase that catalyzes the hydrolysis of S-D-lactoyl-glutathione to form glutathione and D-lactic acid. The sequence is that of Hydroxyacylglutathione hydrolase from Actinobacillus pleuropneumoniae serotype 5b (strain L20).